Here is a 583-residue protein sequence, read N- to C-terminus: Pentatricopeptide repeat-containing protein At2g33760 (583 aa).

9 PPR repeats span residues 71–105 (DDFL…NVSP), 106–140 (SNYT…GFGL), 141–171 (DTYV…MPEK), 172–206 (SIVA…GFEP), 207–241 (DSAT…GLDL), 242–276 (NVKL…NVAA), 277–303 (WTAM…MEDD), 309–339 (NNVT…MTKS), and 345–379 (GVEH…GKAT). The tract at residues 383-458 (LWTAMLGACK…QVGYSVIEVE (76 aa)) is type E motif. The interval 459–489 (NKTYMFSMGDESHQETGEIYRYLETLISRCK) is type E(+) motif. Residues 490-583 (EIGYAPVSEE…NGSCSCLDYW (94 aa)) form a type DYW motif region.

It belongs to the PPR family. PCMP-H subfamily.

In Arabidopsis thaliana (Mouse-ear cress), this protein is Pentatricopeptide repeat-containing protein At2g33760 (PCMP-H6).